Here is a 763-residue protein sequence, read N- to C-terminus: Phosphoglycerol transferase I (763 aa).

The next 4 membrane-spanning stretches (helical) occupy residues 1–21, 26–46, 77–97, and 108–128; these read MSELLSVALFLASVLIYAWKA, WWFAATLTVLGLFVILNITLY, ILPGIGIALALVAVFGALGWI, and VGYSLLALLLALGSVDASPAF.

The protein belongs to the OpgB family.

It localises to the cell inner membrane. It catalyses the reaction a phosphatidylglycerol + a membrane-derived-oligosaccharide D-glucose = a 1,2-diacyl-sn-glycerol + a membrane-derived-oligosaccharide 6-(glycerophospho)-D-glucose.. Its pathway is glycan metabolism; osmoregulated periplasmic glucan (OPG) biosynthesis. Functionally, transfers a phosphoglycerol residue from phosphatidylglycerol to the membrane-bound nascent glucan backbones. In Salmonella paratyphi B (strain ATCC BAA-1250 / SPB7), this protein is Phosphoglycerol transferase I.